The sequence spans 152 residues: Ribonuclease pancreatic beta-type (152 aa).

The first 25 residues, 1-25 (MGLEKSFILFSLLVLVLGWVQPSLG), serve as a signal peptide directing secretion. Residues 31–45 (SSADKFKRQHMDPES) are compositionally biased toward basic and acidic residues. A disordered region spans residues 31-53 (SSADKFKRQHMDPESPSKSSPTY). 2 residues coordinate substrate: lysine 35 and arginine 38. Histidine 40 (proton acceptor) is an active-site residue. 4 disulfides stabilise this stretch: cysteine 54/cysteine 112, cysteine 68/cysteine 123, cysteine 86/cysteine 138, and cysteine 93/cysteine 100. Residues 69–73 (KPVNT), lysine 94, and arginine 113 each bind substrate. Histidine 147 functions as the Proton donor in the catalytic mechanism.

Belongs to the pancreatic ribonuclease family. Monomer.

Its subcellular location is the secreted. It carries out the reaction an [RNA] containing cytidine + H2O = an [RNA]-3'-cytidine-3'-phosphate + a 5'-hydroxy-ribonucleotide-3'-[RNA].. The catalysed reaction is an [RNA] containing uridine + H2O = an [RNA]-3'-uridine-3'-phosphate + a 5'-hydroxy-ribonucleotide-3'-[RNA].. Functionally, endonuclease that catalyzes the cleavage of RNA on the 3' side of pyrimidine nucleotides. Acts on single-stranded and double-stranded RNA. The protein is Ribonuclease pancreatic beta-type of Rattus exulans (Polynesian rat).